We begin with the raw amino-acid sequence, 302 residues long: 4-hydroxy-tetrahydrodipicolinate synthase (302 aa).

Position 56 (Thr-56) interacts with pyruvate. Catalysis depends on Tyr-145, which acts as the Proton donor/acceptor. The active-site Schiff-base intermediate with substrate is the Lys-173. Residue Val-215 participates in pyruvate binding.

This sequence belongs to the DapA family. As to quaternary structure, homotetramer; dimer of dimers.

It localises to the cytoplasm. It carries out the reaction L-aspartate 4-semialdehyde + pyruvate = (2S,4S)-4-hydroxy-2,3,4,5-tetrahydrodipicolinate + H2O + H(+). It participates in amino-acid biosynthesis; L-lysine biosynthesis via DAP pathway; (S)-tetrahydrodipicolinate from L-aspartate: step 3/4. Functionally, catalyzes the condensation of (S)-aspartate-beta-semialdehyde [(S)-ASA] and pyruvate to 4-hydroxy-tetrahydrodipicolinate (HTPA). The chain is 4-hydroxy-tetrahydrodipicolinate synthase from Prochlorococcus marinus (strain MIT 9515).